A 486-amino-acid polypeptide reads, in one-letter code: GTPase Obg (486 aa).

One can recognise an Obg domain in the interval 2 to 159 (SRFIDRVVLH…RELVLELKSV (158 aa)). One can recognise an OBG-type G domain in the interval 160 to 340 (ADVGLVGFPS…LTFALAKLVA (181 aa)). GTP contacts are provided by residues 166-173 (GFPSAGKS), 191-195 (FTTLV), 212-215 (DVPG), 292-295 (NKAD), and 321-323 (SAV). The Mg(2+) site is built by Ser173 and Thr193. The OCT domain occupies 358-438 (PVISNENSFS…IGNVSFDWEP (81 aa)). The tract at residues 462–486 (RIGATERKHASRIRRGLEGLDPEDQ) is disordered.

It belongs to the TRAFAC class OBG-HflX-like GTPase superfamily. OBG GTPase family. As to quaternary structure, monomer. Mg(2+) is required as a cofactor.

The protein resides in the cytoplasm. Its function is as follows. An essential GTPase which binds GTP, GDP and possibly (p)ppGpp with moderate affinity, with high nucleotide exchange rates and a fairly low GTP hydrolysis rate. Plays a role in control of the cell cycle, stress response, ribosome biogenesis and in those bacteria that undergo differentiation, in morphogenesis control. The chain is GTPase Obg from Rhodococcus jostii (strain RHA1).